We begin with the raw amino-acid sequence, 1009 residues long: Dihydropyrimidine dehydrogenase [NADP(+)] (1009 aa).

The 4Fe-4S ferredoxin-type 1 domain occupies arginine 69–phenylalanine 99. Residues cysteine 78, cysteine 81, cysteine 86, and cysteine 90 each contribute to the [4Fe-4S] cluster site. Residue valine 128 participates in FAD binding. The [4Fe-4S] cluster site is built by cysteine 129, cysteine 135, cysteine 139, and glutamine 155. FAD is bound by residues glycine 193 to threonine 197, glutamate 217 to leucine 225, arginine 234, and leucine 260. NADP(+)-binding positions include alanine 339 to threonine 342, arginine 363 to arginine 364, arginine 370, alanine 436 to glycine 438, and aspartate 479 to glycine 484. Glycine 478–threonine 486 is a binding site for FAD. FMN contacts are provided by residues serine 548 and lysine 572–threonine 573. Substrate is bound by residues asparagine 607 and asparagine 666–serine 668. Cysteine 669 acts as the Proton acceptor in catalysis. Lysine 707 provides a ligand contact to FMN. Asparagine 734–threonine 735 contributes to the substrate binding site. FMN-binding positions include glycine 765, threonine 791–glycine 793, and cysteine 814–serine 815. 2 4Fe-4S ferredoxin-type domains span residues valine 932–lysine 964 and threonine 965–arginine 995. [4Fe-4S] cluster contacts are provided by cysteine 941, cysteine 944, cysteine 947, cysteine 951, cysteine 974, cysteine 977, cysteine 980, and cysteine 984.

The protein belongs to the dihydropyrimidine dehydrogenase family. In terms of assembly, homodimer. It depends on [4Fe-4S] cluster as a cofactor. The cofactor is FAD. FMN is required as a cofactor.

It is found in the cytoplasm. The catalysed reaction is 5,6-dihydrouracil + NADP(+) = uracil + NADPH + H(+). It participates in amino-acid biosynthesis; beta-alanine biosynthesis. In terms of biological role, involved in pyrimidine base degradation. Catalyzes the reduction of uracil and thymine. The protein is Dihydropyrimidine dehydrogenase [NADP(+)] (pyd1) of Dictyostelium discoideum (Social amoeba).